The following is a 507-amino-acid chain: Dolichyl pyrophosphate Man9GlcNAc2 alpha-1,3-glucosyltransferase (507 aa).

Over 1–2 (ME) the chain is Cytoplasmic. The chain crosses the membrane as a helical span at residues 3–23 (SWPWMAVVVLLGLTVRWTVSL). The Lumenal segment spans residues 24–114 (SSYSGAGKPP…SQAHKLFMRA (91 aa)). N-linked (GlcNAc...) asparagine glycosylation is present at Asn59. The helical transmembrane segment at 115–135 (TVLAADLLIYVPAVLLYCYSL) threads the bilayer. At 136 to 143 (KEISPKRK) the chain is on the cytoplasmic side. Residues 144-164 (IASALCILLYPGLILIDYGHF) traverse the membrane as a helical segment. The Lumenal portion of the chain corresponds to 165–172 (QYNSVSLG). Residues 173–193 (FALWGVLGVSWDWDLLGSLAF) form a helical membrane-spanning segment. At 194-229 (CLALNYKQMELYHSLPFFCFLLGKCFKKGLKGKGLA) the chain is on the cytoplasmic side. Residues 230 to 250 (LFIRIACTVLASFLLCWLPFL) traverse the membrane as a helical segment. The Lumenal portion of the chain corresponds to 251-297 (TEREHALQVVRRLFPVDRGLFEDKVANIWCSVNVFLKIKDTLPRHIQ). A helical transmembrane segment spans residues 298-318 (IAISFCFTLLSLLPACIKLTV). The Cytoplasmic segment spans residues 319–332 (RPSCKGFRFTLVSC). The helical transmembrane segment at 333 to 353 (ALSFFLFSFQVHEKSILLVSL) threads the bilayer. Residues 354–361 (PVCLVLTE) lie on the Lumenal side of the membrane. The chain crosses the membrane as a helical span at residues 362-382 (IPFMSTWFLLVSTFSMLPLLL). Over 383–385 (KDE) the chain is Cytoplasmic. Residues 386–406 (LLLPSVVTVMAFVIACGTFFP) traverse the membrane as a helical segment. The Lumenal portion of the chain corresponds to 407–437 (MLENTSEEQLQLKSFAVSVRRHLPGFTFLPR). The chain crosses the membrane as a helical span at residues 438 to 458 (IMQCLFLSSVITMVLLTILSV). Residues 459-468 (TLDPPQKLPD) are Cytoplasmic-facing. The helical transmembrane segment at 469–489 (LFPVLICFVSCVNFVFFLVYF) threads the bilayer. The Lumenal segment spans residues 490–507 (NIVIMWDSKNGRNRKKIE).

This sequence belongs to the ALG6/ALG8 glucosyltransferase family.

It localises to the endoplasmic reticulum membrane. The catalysed reaction is an alpha-D-Man-(1-&gt;2)-alpha-D-Man-(1-&gt;2)-alpha-D-Man-(1-&gt;3)-[alpha-D-Man-(1-&gt;2)-alpha-D-Man-(1-&gt;3)-[alpha-D-Man-(1-&gt;2)-alpha-D-Man-(1-&gt;6)]-alpha-D-Man-(1-&gt;6)]-beta-D-Man-(1-&gt;4)-beta-D-GlcNAc-(1-&gt;4)-alpha-D-GlcNAc-diphospho-di-trans,poly-cis-dolichol + a di-trans,poly-cis-dolichyl beta-D-glucosyl phosphate = an alpha-D-Glc-(1-&gt;3)-alpha-D-Man-(1-&gt;2)-alpha-D-Man-(1-&gt;2)-alpha-D-Man-(1-&gt;3)-[alpha-D-Man-(1-&gt;2)-alpha-D-Man-(1-&gt;3)-[alpha-D-Man-(1-&gt;2)-alpha-D-Man-(1-&gt;6)]-alpha-D-Man-(1-&gt;6)]-beta-D-Man-(1-&gt;4)-beta-D-GlcNAc-(1-&gt;4)-alpha-D-GlcNAc-diphospho-di-trans,poly-cis-dolichol + a di-trans,poly-cis-dolichyl phosphate + H(+). The protein operates within protein modification; protein glycosylation. In terms of biological role, dolichyl pyrophosphate Man9GlcNAc2 alpha-1,3-glucosyltransferase that operates in the biosynthetic pathway of dolichol-linked oligosaccharides, the glycan precursors employed in protein asparagine (N)-glycosylation. The assembly of dolichol-linked oligosaccharides begins on the cytosolic side of the endoplasmic reticulum membrane and finishes in its lumen. The sequential addition of sugars to dolichol pyrophosphate produces dolichol-linked oligosaccharides containing fourteen sugars, including two GlcNAcs, nine mannoses and three glucoses. Once assembled, the oligosaccharide is transferred from the lipid to nascent proteins by oligosaccharyltransferases. In the lumen of the endoplasmic reticulum, adds the first glucose residue from dolichyl phosphate glucose (Dol-P-Glc) onto the lipid-linked oligosaccharide intermediate Man(9)GlcNAc(2)-PP-Dol to produce Glc(1)Man(9)GlcNAc(2)-PP-Dol. Glc(1)Man(9)GlcNAc(2)-PP-Dol is a substrate for ALG8, the following enzyme in the biosynthetic pathway. The polypeptide is Dolichyl pyrophosphate Man9GlcNAc2 alpha-1,3-glucosyltransferase (Mus musculus (Mouse)).